We begin with the raw amino-acid sequence, 407 residues long: Phosphopentomutase (407 aa).

The Mn(2+) site is built by Asp10, Asp306, His311, Asp347, His348, and His359.

Belongs to the phosphopentomutase family. It depends on Mn(2+) as a cofactor.

It is found in the cytoplasm. It catalyses the reaction 2-deoxy-alpha-D-ribose 1-phosphate = 2-deoxy-D-ribose 5-phosphate. It carries out the reaction alpha-D-ribose 1-phosphate = D-ribose 5-phosphate. It participates in carbohydrate degradation; 2-deoxy-D-ribose 1-phosphate degradation; D-glyceraldehyde 3-phosphate and acetaldehyde from 2-deoxy-alpha-D-ribose 1-phosphate: step 1/2. In terms of biological role, isomerase that catalyzes the conversion of deoxy-ribose 1-phosphate (dRib-1-P) and ribose 1-phosphate (Rib-1-P) to deoxy-ribose 5-phosphate (dRib-5-P) and ribose 5-phosphate (Rib-5-P), respectively. The sequence is that of Phosphopentomutase from Edwardsiella ictaluri (strain 93-146).